Reading from the N-terminus, the 112-residue chain is cAMP-regulated phosphoprotein 19 (112 aa).

Methionine 1 bears the N-acetylmethionine mark. A compositionally biased stretch (low complexity) spans 1-11 (MSAEVPEAASA). A disordered region spans residues 1-49 (MSAEVPEAASAEEQKEMEDKVTSPEKAEEAKLKARYPHLGQKPGGSDFL). Serine 2 is modified (N-acetylserine). A phosphoserine mark is found at serine 2 and serine 23. Over residues 12 to 32 (EEQKEMEDKVTSPEKAEEAKL) the composition is skewed to basic and acidic residues. Residues serine 62 and serine 104 each carry the phosphoserine; by GWL modification. The disordered stretch occupies residues 72 to 112 (MKNKQLPTATPDKTEVTGDHIPTPQDLPQRKPSLVASKLAG). Serine 104 is modified (phosphoserine; by PKA). An N6-acetyllysine modification is found at lysine 109.

In terms of assembly, interacts (when phosphorylated at Ser-62) with PPP2R2D. Interacts with SNCA. Interacts with PPP2R2A; the interaction is direct and this interaction inhibits PP2A activity. Phosphorylation at Ser-62 by MASTL/GWL during mitosis is essential for interaction with PPP2R2D (PR55-delta) and subsequent inactivation of PP2A. Phosphorylated by PKA. As to expression, isoform ARPP-19 is found in all brain regions and also present in non-neuronal tissues. Isoform ARPP-16 is enriched in the caudate nucleus, found in low levels in cerebral cortex.

It is found in the cytoplasm. Protein phosphatase inhibitor that specifically inhibits protein phosphatase 2A (PP2A) during mitosis. Inhibition of PP2A is enhanced when ARPP19 is phosphorylated. When phosphorylated at Ser-62 during mitosis, specifically interacts with PPP2R2D (PR55-delta) and inhibits its activity, leading to inactivation of PP2A, an essential condition to keep cyclin-B1-CDK1 activity high during M phase. May indirectly enhance GAP-43 expression. The polypeptide is cAMP-regulated phosphoprotein 19 (ARPP19) (Bos taurus (Bovine)).